The chain runs to 444 residues: Transcription activator AKTR-3 (444 aa).

The segment at residues 16-43 (CDFCTQSKLRCNKNKPSCRRCTIQQQPC) is a DNA-binding region (zn(2)-C6 fungal-type). A disordered region spans residues 49 to 89 (RRTGRPPKHPRTANDCQEANGQHGEQDPVTSTPGGSCQQQS). Residues 50-59 (RTGRPPKHPR) show a composition bias toward basic residues. Polar residues predominate over residues 76-89 (PVTSTPGGSCQQQS).

Its subcellular location is the nucleus. In terms of biological role, transcription factor that regulates the expression of the gene clusters that mediate the biosynthesis of the host-selective toxins (HSTs) AK-toxins responsible for Japanese pear black spot disease by the Japanese pear pathotype. AK-toxins are esters of 9,10-epoxy 8-hydroxy 9-methyldecatrienoic acid (EDA). On cellular level, AK-toxins affect plasma membrane of susceptible cells and cause a sudden increase in loss of K(+) after a few minutes of toxin treatment. This chain is Transcription activator AKTR-3, found in Alternaria alternata (Alternaria rot fungus).